Reading from the N-terminus, the 869-residue chain is Bifunctional uridylyltransferase/uridylyl-removing enzyme (869 aa).

Positions 1–332 (MTDTPAERPD…QFDGEATPEP (332 aa)) are uridylyltransferase. The interval 333–691 (LGGGFSLRRG…RRAVPDNDAL (359 aa)) is uridylyl-removing. One can recognise an HD domain in the interval 450–572 (VDQHTLMVLR…VGTRERLDYL (123 aa)). ACT domains lie at 692–774 (EVFV…RAVP) and 798–869 (RISL…LDPV).

The protein belongs to the GlnD family. Mg(2+) serves as cofactor.

It catalyses the reaction [protein-PII]-L-tyrosine + UTP = [protein-PII]-uridylyl-L-tyrosine + diphosphate. It carries out the reaction [protein-PII]-uridylyl-L-tyrosine + H2O = [protein-PII]-L-tyrosine + UMP + H(+). With respect to regulation, uridylyltransferase (UTase) activity is inhibited by glutamine, while glutamine activates uridylyl-removing (UR) activity. Modifies, by uridylylation and deuridylylation, the PII regulatory proteins (GlnB and homologs), in response to the nitrogen status of the cell that GlnD senses through the glutamine level. Under low glutamine levels, catalyzes the conversion of the PII proteins and UTP to PII-UMP and PPi, while under higher glutamine levels, GlnD hydrolyzes PII-UMP to PII and UMP (deuridylylation). Thus, controls uridylylation state and activity of the PII proteins, and plays an important role in the regulation of nitrogen assimilation and metabolism. This is Bifunctional uridylyltransferase/uridylyl-removing enzyme from Xanthomonas euvesicatoria pv. vesicatoria (strain 85-10) (Xanthomonas campestris pv. vesicatoria).